Consider the following 249-residue polypeptide: Ribonuclease PH (249 aa).

Residues R86 and 124–126 contribute to the phosphate site; that span reads GTR.

The protein belongs to the RNase PH family. Homohexameric ring arranged as a trimer of dimers.

The catalysed reaction is tRNA(n+1) + phosphate = tRNA(n) + a ribonucleoside 5'-diphosphate. Functionally, phosphorolytic 3'-5' exoribonuclease that plays an important role in tRNA 3'-end maturation. Removes nucleotide residues following the 3'-CCA terminus of tRNAs; can also add nucleotides to the ends of RNA molecules by using nucleoside diphosphates as substrates, but this may not be physiologically important. Probably plays a role in initiation of 16S rRNA degradation (leading to ribosome degradation) during starvation. This is Ribonuclease PH from Clostridium botulinum (strain Eklund 17B / Type B).